A 198-amino-acid polypeptide reads, in one-letter code: Protein GrpE (198 aa).

The protein belongs to the GrpE family. Homodimer.

The protein localises to the cytoplasm. Participates actively in the response to hyperosmotic and heat shock by preventing the aggregation of stress-denatured proteins, in association with DnaK and GrpE. It is the nucleotide exchange factor for DnaK and may function as a thermosensor. Unfolded proteins bind initially to DnaJ; upon interaction with the DnaJ-bound protein, DnaK hydrolyzes its bound ATP, resulting in the formation of a stable complex. GrpE releases ADP from DnaK; ATP binding to DnaK triggers the release of the substrate protein, thus completing the reaction cycle. Several rounds of ATP-dependent interactions between DnaJ, DnaK and GrpE are required for fully efficient folding. This is Protein GrpE from Actinobacillus pleuropneumoniae serotype 5b (strain L20).